Reading from the N-terminus, the 209-residue chain is Tumor suppressor candidate gene 1 protein (209 aa).

Disordered regions lie at residues 1–55 (MWRM…DGAR), 111–157 (ALRL…LRAR), and 172–209 (LHLE…GPWL). Residues 14–47 (CCGGDGAADGRGPGRSGRARGGGSPSGGGGGVGW) show a composition bias toward gly residues. A coiled-coil region spans residues 70–114 (LEAIRARDEWDRQNARLRQENARLRLENRRLKRENRSLFRQALRL). Residues 125-149 (EARRVPEEASTNRRARDSGREDEPG) show a composition bias toward basic and acidic residues. Ser-150 is subject to Phosphoserine. A coiled-coil region spans residues 152-177 (RALRARLEKLEAMYRRALLQLHLEQR). Residues 174 to 188 (LEQRGPRPSGDKEEQ) show a composition bias toward basic and acidic residues.

In terms of tissue distribution, widely expressed at low level. Expressed at higher level in testis, weakly expressed in muscle, colon, lung and spleen. Not detected in 3 non small cell lung carcinoma (NSCLC) cell lines with homozygous deletion of the 9p region, while it is down-regulated in 3 other tumor cell lines.

In Homo sapiens (Human), this protein is Tumor suppressor candidate gene 1 protein (TUSC1).